The chain runs to 341 residues: Krueppel-like factor 17 (341 aa).

The tract at residues 214–252 (VTESNTQEEPFVREPPTPAPEGAESPSTSRGATRRQSPV) is disordered. The span at 238–252 (SPSTSRGATRRQSPV) shows a compositional bias: polar residues. 3 consecutive C2H2-type zinc fingers follow at residues 256–280 (YVCT…QRKH), 286–310 (FACD…KRIH), and 316–338 (HKCD…KRTH).

The protein belongs to the Sp1 C2H2-type zinc-finger protein family. In terms of tissue distribution, exclusively expressed in testis and ovary. Localized to step 3-8 spermatids in testis and growing oocytes in ovary.

Its subcellular location is the nucleus. Functionally, transcription repressor that binds to the promoter of target genes and prevents their expression. Acts as a negative regulator of epithelial-mesenchymal transition and metastasis in breast cancer. Specifically binds the 5'-CACCC-3' sequence in the promoter of ID1, a key metastasis regulator in breast cancer, and repress its expression. May be a germ cell-specific transcription factor that plays important roles in spermatid differentiation and oocyte development. The sequence is that of Krueppel-like factor 17 (Klf17) from Mus musculus (Mouse).